The primary structure comprises 540 residues: Arylsulfatase K (540 aa).

A signal peptide spans 1-22 (MLLLWVSVVAASALAAPAPGAD). 2 residues coordinate Ca(2+): aspartate 44 and cysteine 84. The Nucleophile role is filled by cysteine 84. At cysteine 84 the chain carries 3-oxoalanine (Cys). N-linked (GlcNAc...) asparagine glycosylation occurs at asparagine 112. Lysine 132 serves as a coordination point for substrate. Asparagine 197 is a glycosylation site (N-linked (GlcNAc...) asparagine). Histidine 255 is a substrate binding site. An N-linked (GlcNAc...) asparagine glycan is attached at asparagine 266. The Ca(2+) site is built by aspartate 317 and histidine 318. 3 N-linked (GlcNAc...) asparagine glycosylation sites follow: asparagine 379, asparagine 417, and asparagine 502.

It belongs to the sulfatase family. Ca(2+) is required as a cofactor. Post-translationally, the conversion to 3-oxoalanine (also known as C-formylglycine, FGly), of a serine or cysteine residue in prokaryotes and of a cysteine residue in eukaryotes, is critical for catalytic activity. In terms of processing, the 75-kDa precursor undergoes proteolytic processing to yield a 23 kDa form. N-glycosylated with both high mannose and complex type sugars.

The protein localises to the secreted. It is found in the lysosome. It catalyses the reaction an aryl sulfate + H2O = a phenol + sulfate + H(+). The catalysed reaction is Hydrolysis of the 2-sulfate groups of the 2-O-sulfo-D-glucuronate residues of chondroitin sulfate, heparin and heparitin sulfate.. In terms of biological role, catalyzes the hydrolysis of pseudosubstrates such as p-nitrocatechol sulfate and p-nitrophenyl sulfate. Catalyzes the hydrolysis of the 2-sulfate groups of the 2-O-sulfo-D-glucuronate residues of chondroitin sulfate, heparin and heparitin sulfate. Acts selectively on 2-sulfoglucuronate and lacks activity against 2-sulfoiduronate. The chain is Arylsulfatase K (ARSK) from Bos taurus (Bovine).